We begin with the raw amino-acid sequence, 217 residues long: ATP phosphoribosyltransferase (217 aa).

This sequence belongs to the ATP phosphoribosyltransferase family. Short subfamily. As to quaternary structure, heteromultimer composed of HisG and HisZ subunits.

It is found in the cytoplasm. It catalyses the reaction 1-(5-phospho-beta-D-ribosyl)-ATP + diphosphate = 5-phospho-alpha-D-ribose 1-diphosphate + ATP. It functions in the pathway amino-acid biosynthesis; L-histidine biosynthesis; L-histidine from 5-phospho-alpha-D-ribose 1-diphosphate: step 1/9. In terms of biological role, catalyzes the condensation of ATP and 5-phosphoribose 1-diphosphate to form N'-(5'-phosphoribosyl)-ATP (PR-ATP). Has a crucial role in the pathway because the rate of histidine biosynthesis seems to be controlled primarily by regulation of HisG enzymatic activity. This chain is ATP phosphoribosyltransferase (hisG), found in Neisseria meningitidis serogroup A / serotype 4A (strain DSM 15465 / Z2491).